The primary structure comprises 177 residues: TRAF-interacting protein with FHA domain-containing protein A (177 aa).

The region spanning 48-104 is the FHA domain; the sequence is VAFGRDYNVCRYPLLSNRVSRIQFNLQFFKHFNCSTTAIEIKNLSKKNKLYVDNLEL.

This sequence belongs to the TIFA family. Interacts with traf6.

It localises to the cytoplasm. Functionally, adapter molecule that plays a key role in the activation of pro-inflammatory NF-kappa-B signaling following detection of bacterial pathogen-associated molecular pattern metabolites (PAMPs). Promotes activation of an innate immune response by inducing the oligomerization and polyubiquitination of TRAF6, which leads to the activation of TAK1 and IKK through a proteasome-independent mechanism. The chain is TRAF-interacting protein with FHA domain-containing protein A from Xenopus tropicalis (Western clawed frog).